Here is a 59-residue protein sequence, read N- to C-terminus: Large ribosomal subunit protein uL30 (59 aa).

It belongs to the universal ribosomal protein uL30 family. In terms of assembly, part of the 50S ribosomal subunit.

The sequence is that of Large ribosomal subunit protein uL30 from Haemophilus ducreyi (strain 35000HP / ATCC 700724).